Consider the following 438-residue polypeptide: MPRRSPADPAAALAPRRTTLPGGLRVVTEFLPAVHSASVGVWVGVGSRDEGATVAGAAHFLEHLLFKSTPTRSAVDIAQAMDAVGGELNAFTAKEHTCYYAHVLGSDLPLAVDLVADVVLNGRCAADDVEVERDVVLEEIAMRDDDPEDALADMFLAALFGDHPVGRPVIGSAQSVSVMTRAQLQSFHLRRYTPEWMVVAAAGNVDHDGLVALVREHFGSRLVRGRRPVAPRKGTGRVNGSPRLTLVSRDAEQTHVSLGIRTPGRGWEHRWALSVLHTALGGGLSSRLFQEVRETRGLAYSVYSALDLFADSGALSVYAACLPERFADVMRVTADVLESVARDGITEAECGIAKGSLRGGLVLGLEDSSSRMSRLGRSELNYGKHRSIEHTLRQIEQVTVEEVNAVARHLLSRRYGAAVLGPHGSKRSLPQQLRAMVG.

Zn(2+) is bound at residue His-59. Glu-62 functions as the Proton acceptor in the catalytic mechanism. His-63 and Glu-139 together coordinate Zn(2+).

The protein belongs to the peptidase M16 family. It depends on Zn(2+) as a cofactor.

This is an uncharacterized protein from Mycobacterium tuberculosis (strain CDC 1551 / Oshkosh).